We begin with the raw amino-acid sequence, 539 residues long: Chaperonin GroEL (539 aa).

ATP contacts are provided by residues 29–32 (TLGP), 86–90 (DGTTT), Gly-413, 479–481 (DAL), and Asp-495.

It belongs to the chaperonin (HSP60) family. As to quaternary structure, forms a cylinder of 14 subunits composed of two heptameric rings stacked back-to-back. Interacts with the co-chaperonin GroES.

The protein localises to the cytoplasm. It catalyses the reaction ATP + H2O + a folded polypeptide = ADP + phosphate + an unfolded polypeptide.. Together with its co-chaperonin GroES, plays an essential role in assisting protein folding. The GroEL-GroES system forms a nano-cage that allows encapsulation of the non-native substrate proteins and provides a physical environment optimized to promote and accelerate protein folding. In Pseudothermotoga lettingae (strain ATCC BAA-301 / DSM 14385 / NBRC 107922 / TMO) (Thermotoga lettingae), this protein is Chaperonin GroEL.